The primary structure comprises 462 residues: Histidine--tRNA ligase (462 aa).

It belongs to the class-II aminoacyl-tRNA synthetase family. In terms of assembly, homodimer.

The protein resides in the cytoplasm. The catalysed reaction is tRNA(His) + L-histidine + ATP = L-histidyl-tRNA(His) + AMP + diphosphate + H(+). The polypeptide is Histidine--tRNA ligase (Trichormus variabilis (strain ATCC 29413 / PCC 7937) (Anabaena variabilis)).